The following is a 317-amino-acid chain: Ribonuclease Z (317 aa).

7 residues coordinate Zn(2+): H61, H63, D65, H66, H139, D210, and H268. D65 serves as the catalytic Proton acceptor.

Belongs to the RNase Z family. Homodimer. Zn(2+) serves as cofactor.

The catalysed reaction is Endonucleolytic cleavage of RNA, removing extra 3' nucleotides from tRNA precursor, generating 3' termini of tRNAs. A 3'-hydroxy group is left at the tRNA terminus and a 5'-phosphoryl group is left at the trailer molecule.. Its activity is regulated as follows. Inhibited by high salt concentrations. Its function is as follows. Zinc phosphodiesterase, which displays some tRNA 3'-processing endonuclease activity. Probably involved in tRNA maturation, by removing a 3'-trailer from precursor tRNA. Can also catalyze the 5' end cleavage of the 5S rRNA. This chain is Ribonuclease Z, found in Haloferax volcanii (strain ATCC 29605 / DSM 3757 / JCM 8879 / NBRC 14742 / NCIMB 2012 / VKM B-1768 / DS2) (Halobacterium volcanii).